The sequence spans 496 residues: MDNNSVIGSEVDAEADESYVNAALEDGQTGKKSVQRNYATVLTEEDIRALMEIDVQSVSDFTSLSKAEATLLLSHLRWNVDCICKQWSAGAQSVRDSVGLLELDPPSDDNEYFCGACGESHPHKNLASVSCGHRICTRCWTSHINKIISEKPAAEWNLWLKCPVRVGLHASCPASVGLDTIERFASKREKFNYNQYLLRSYVDNRETMKWHPIQGSRCAIDLSPGSGNASVSCHRLVRFCWNCREDAHSPVDCKTAAKWLLENAVPCPKCKLRIPRNQDNSLKMKCLPCNYVFCWFCHVDWIEDMEGTGGDLHFCTFDAVLSDQRGKMSESDSNRYEDCYENWDSNELLMQKEQANLPKLDTIIQELSNTQLENVSQLKFILEAGLQIIECRRVLEWTYVYGYYLREDEVGKQNLLKDTQERLKKFVENLKHCLETNLQPFRYEEEPSKDFNAFRIKLTELTSLTRNHYENVVKDVENGLASVVSEGEASGSGRNQ.

A TRIAD supradomain region spans residues 110–319 (NEYFCGACGE…GDLHFCTFDA (210 aa)). Residues cysteine 114, cysteine 117, cysteine 131, histidine 133, cysteine 136, cysteine 139, cysteine 162, cysteine 172, cysteine 240, cysteine 243, histidine 248, cysteine 253, cysteine 267, cysteine 270, cysteine 286, and cysteine 289 each contribute to the Zn(2+) site. An RING-type 1 zinc finger spans residues 114 to 172 (CGACGESHPHKNLASVSCGHRICTRCWTSHINKIISEKPAAEWNLWLKCPVRVGLHASC). The IBR-type zinc-finger motif lies at 191 to 253 (FNYNQYLLRS…REDAHSPVDC (63 aa)). The RING-type 2; atypical zinc finger occupies 267-297 (CPKCKLRIPRNQDNSLKMKCLPCNYVFCWFC).

Belongs to the RBR family. Ariadne subfamily. Requires Zn(2+) as cofactor. Preferentially expressed in roots.

It carries out the reaction [E2 ubiquitin-conjugating enzyme]-S-ubiquitinyl-L-cysteine + [acceptor protein]-L-lysine = [E2 ubiquitin-conjugating enzyme]-L-cysteine + [acceptor protein]-N(6)-ubiquitinyl-L-lysine.. It functions in the pathway protein modification; protein ubiquitination. Might act as an E3 ubiquitin-protein ligase, or as part of E3 complex, which accepts ubiquitin from specific E2 ubiquitin-conjugating enzymes and then transfers it to substrates. The chain is Probable E3 ubiquitin-protein ligase ARI12 (ARI12) from Arabidopsis thaliana (Mouse-ear cress).